An 885-amino-acid polypeptide reads, in one-letter code: Alanine--tRNA ligase (885 aa).

4 residues coordinate Zn(2+): H564, H568, C676, and H680.

Belongs to the class-II aminoacyl-tRNA synthetase family. Zn(2+) is required as a cofactor.

The protein resides in the cytoplasm. The enzyme catalyses tRNA(Ala) + L-alanine + ATP = L-alanyl-tRNA(Ala) + AMP + diphosphate. Its function is as follows. Catalyzes the attachment of alanine to tRNA(Ala) in a two-step reaction: alanine is first activated by ATP to form Ala-AMP and then transferred to the acceptor end of tRNA(Ala). Also edits incorrectly charged Ser-tRNA(Ala) and Gly-tRNA(Ala) via its editing domain. The polypeptide is Alanine--tRNA ligase (Brucella anthropi (strain ATCC 49188 / DSM 6882 / CCUG 24695 / JCM 21032 / LMG 3331 / NBRC 15819 / NCTC 12168 / Alc 37) (Ochrobactrum anthropi)).